The sequence spans 615 residues: Zinc finger protein 653 (615 aa).

3 disordered regions span residues 1 to 46 (MAER…ARRR), 93 to 115 (RSGRHGKPWEQVPKKPKRKKRRR), and 174 to 235 (PLSD…SGLI). Over residues 7 to 25 (EPGAEAEAGAGGEAAAEEG) the composition is skewed to low complexity. Residues 106–115 (KKPKRKKRRR) are compositionally biased toward basic residues. 2 stretches are compositionally biased toward low complexity: residues 192-203 (GSSDSSSSGSSS) and 212-232 (QPAKASAAAAALTPASPTGSS). C2H2-type zinc fingers lie at residues 467–492 (FHCPYEGCSQVYVALSSFQNHVNLVH), 498–522 (KVCPHPGCGKKFYLSNHLRRHMIIH), 528–550 (FTCETCGKSFKRKNHLEVHRRTH), 556–578 (LQCEICGYQCRQRASLNWHMKKH), and 586–609 (FTCDRCGKRFEKLDSVKFHTLKSH).

This sequence belongs to the krueppel C2H2-type zinc-finger protein family. As to quaternary structure, interacts with NR5A1. As to expression, highly expressed in testis and spleen. Moderately expressed in lung, adrenal gland, uterus, and ovary. Very low expression in pancreas, heart, skeletal muscle, adipose tissue, kidney, and liver.

It localises to the nucleus. Its function is as follows. Transcriptional repressor. May repress NR5A1, PPARG, NR1H3, NR4A2, ESR1 and NR3C1 transcriptional activity. In Mus musculus (Mouse), this protein is Zinc finger protein 653 (Znf653).